Here is a 198-residue protein sequence, read N- to C-terminus: uncharacterized protein (198 aa).

Residues Glu20–Glu58 are a coiled coil. Residues Leu144–Arg198 are disordered. A compositionally biased stretch (basic residues) spans His176–Ser188. Over residues Gln189 to Arg198 the composition is skewed to polar residues.

It localises to the nucleus. The protein resides in the nucleolus. This is an uncharacterized protein from Schizosaccharomyces pombe (strain 972 / ATCC 24843) (Fission yeast).